A 130-amino-acid polypeptide reads, in one-letter code: Small ribosomal subunit protein uS8 (130 aa).

Belongs to the universal ribosomal protein uS8 family. Part of the 30S ribosomal subunit. Contacts proteins S5 and S12.

Its function is as follows. One of the primary rRNA binding proteins, it binds directly to 16S rRNA central domain where it helps coordinate assembly of the platform of the 30S subunit. The sequence is that of Small ribosomal subunit protein uS8 from Teredinibacter turnerae (strain ATCC 39867 / T7901).